The primary structure comprises 363 residues: Dihydroorotate dehydrogenase (quinone) (363 aa).

Residues 67 to 71 (AGFDK) and threonine 91 contribute to the FMN site. Lysine 71 lines the substrate pocket. Position 116–120 (116–120 (NRMGF)) interacts with substrate. FMN contacts are provided by asparagine 156 and asparagine 189. Asparagine 189 is a substrate binding site. The active-site Nucleophile is serine 192. Asparagine 194 is a binding site for substrate. The FMN site is built by lysine 231 and threonine 259. Residue 260–261 (NT) coordinates substrate. FMN contacts are provided by residues glycine 287, glycine 316, and 337 to 338 (YT).

The protein belongs to the dihydroorotate dehydrogenase family. Type 2 subfamily. In terms of assembly, monomer. It depends on FMN as a cofactor.

The protein localises to the cell membrane. The catalysed reaction is (S)-dihydroorotate + a quinone = orotate + a quinol. Its pathway is pyrimidine metabolism; UMP biosynthesis via de novo pathway; orotate from (S)-dihydroorotate (quinone route): step 1/1. Functionally, catalyzes the conversion of dihydroorotate to orotate with quinone as electron acceptor. The polypeptide is Dihydroorotate dehydrogenase (quinone) (Kocuria rhizophila (strain ATCC 9341 / DSM 348 / NBRC 103217 / DC2201)).